The primary structure comprises 155 residues: Deoxyuridine 5'-triphosphate nucleotidohydrolase (155 aa).

Residues 71–73 (RSG), Asn84, 88–90 (TID), and Lys98 each bind substrate.

The protein belongs to the dUTPase family. Mg(2+) is required as a cofactor.

It carries out the reaction dUTP + H2O = dUMP + diphosphate + H(+). Its pathway is pyrimidine metabolism; dUMP biosynthesis; dUMP from dCTP (dUTP route): step 2/2. In terms of biological role, this enzyme is involved in nucleotide metabolism: it produces dUMP, the immediate precursor of thymidine nucleotides and it decreases the intracellular concentration of dUTP so that uracil cannot be incorporated into DNA. In Corynebacterium jeikeium (strain K411), this protein is Deoxyuridine 5'-triphosphate nucleotidohydrolase.